The following is a 340-amino-acid chain: tRNA N6-adenosine threonylcarbamoyltransferase (340 aa).

The Fe cation site is built by His111 and His115. Residues 133–137, Asp166, Gly179, Asp183, and Asn274 each bind substrate; that span reads VVSGG. Asp299 lines the Fe cation pocket.

Belongs to the KAE1 / TsaD family. Fe(2+) serves as cofactor.

The protein localises to the cytoplasm. It carries out the reaction L-threonylcarbamoyladenylate + adenosine(37) in tRNA = N(6)-L-threonylcarbamoyladenosine(37) in tRNA + AMP + H(+). Its function is as follows. Required for the formation of a threonylcarbamoyl group on adenosine at position 37 (t(6)A37) in tRNAs that read codons beginning with adenine. Is involved in the transfer of the threonylcarbamoyl moiety of threonylcarbamoyl-AMP (TC-AMP) to the N6 group of A37, together with TsaE and TsaB. TsaD likely plays a direct catalytic role in this reaction. The polypeptide is tRNA N6-adenosine threonylcarbamoyltransferase (Brachyspira hyodysenteriae (strain ATCC 49526 / WA1)).